The primary structure comprises 329 residues: Replication factor C small subunit 1 (329 aa).

An ATP-binding site is contributed by glycine 44 to threonine 51.

The protein belongs to the activator 1 small subunits family. RfcS subfamily. Heteromultimer composed of small subunits (RfcS) and large subunits (RfcL).

In terms of biological role, part of the RFC clamp loader complex which loads the PCNA sliding clamp onto DNA. This is Replication factor C small subunit 1 from Pyrobaculum arsenaticum (strain DSM 13514 / JCM 11321 / PZ6).